Reading from the N-terminus, the 68-residue chain is Palustrin-1c (68 aa).

The first 22 residues, 1–22, serve as a signal peptide directing secretion; sequence MFTMKKSLLLLFFLGTISLSLC. The propeptide occupies 23 to 39; that stretch reads EEERGADEEEGDGEKLT. Cys62 and Cys68 are disulfide-bonded.

Expressed by the skin glands.

It is found in the secreted. Antimicrobial peptide. This chain is Palustrin-1c, found in Odorrana versabilis (Chinese bamboo leaf odorous frog).